The following is a 610-amino-acid chain: Glutamine--fructose-6-phosphate aminotransferase [isomerizing] (610 aa).

The active-site Nucleophile; for GATase activity is C2. The Glutamine amidotransferase type-2 domain occupies 2 to 220 (CGIISAISKK…EGDIAILSHK (219 aa)). 2 SIS domains span residues 289–429 (AHAL…LKTN) and 461–600 (LAKE…IDKP). Residue K605 is the For Fru-6P isomerization activity of the active site.

As to quaternary structure, homodimer.

It is found in the cytoplasm. The catalysed reaction is D-fructose 6-phosphate + L-glutamine = D-glucosamine 6-phosphate + L-glutamate. In terms of biological role, catalyzes the first step in hexosamine metabolism, converting fructose-6P into glucosamine-6P using glutamine as a nitrogen source. In Buchnera aphidicola subsp. Baizongia pistaciae (strain Bp), this protein is Glutamine--fructose-6-phosphate aminotransferase [isomerizing].